A 665-amino-acid chain; its full sequence is Sodium/glucose cotransporter 1 (665 aa).

Residues 1 to 24 (MDSSTLSPAVTATDAPIPSYERIR) are Extracellular-facing. Residues 25-47 (NAADISVIVIYFVVVMAVGLWAM) traverse the membrane as a helical segment. At 48–66 (FSTNRGTVGGFFLAGRSMV) the chain is on the cytoplasmic side. Residues 67–90 (WWPIGASLFASNIGSGHFVGLAGT) form a helical membrane-spanning segment. Residues 91-95 (GAAAG) lie on the Extracellular side of the membrane. A helical transmembrane segment spans residues 96–117 (IAMGGFEWNALVLVVVLGWIFV). Residues 118–139 (PIYIKAGVVTMPEYLRKRFGGK) are Cytoplasmic-facing. The chain crosses the membrane as a helical span at residues 140–169 (RIQIYLSVLSLLLYIFTKISADIFSGAIFI). At 170 to 176 (NLALGLD) the chain is on the extracellular side. A helical transmembrane segment spans residues 177 to 193 (IYLAIFILLAITALYTI). Topologically, residues 194–202 (TGGLAAVIY) are cytoplasmic. The helical transmembrane segment at 203-221 (TDTLQTAIMLVGSFILTGF) threads the bilayer. Residues 222-275 (AFNEVGGYEAFMDKYMKAIPTKVSNGNFTAKEECYTPRADSFHIFRDPITGDMP) are Extracellular-facing. N-linked (GlcNAc...) asparagine glycosylation occurs at N248. 5 cysteine pairs are disulfide-bonded: C255-C511, C255-C611, C345-C351, C355-C361, and C517-C522. Residues 276–295 (WPGLIFGLAILALWYWCTDQ) traverse the membrane as a helical segment. At 296–309 (VIVQRCLSAKNMSH) the chain is on the cytoplasmic side. Residues 310-331 (VKADCTLCGYLKLLPMFLMVMP) form a helical membrane-spanning segment. The Extracellular segment spans residues 332–375 (GMISRILYTEKIACVLPEECQKYCGTPVGCTNIAYPTLVVELMP). A helical transmembrane segment spans residues 376 to 406 (NGLRGLMLSVMMASLMSSLTSIFNSASTLFT). Residues 407–422 (MDIYTKIRKKASEKEL) lie on the Cytoplasmic side of the membrane. Residues 423–444 (MIAGRLFILVLIGISIAWVPIV) traverse the membrane as a helical segment. The Extracellular portion of the chain corresponds to 445–451 (QSAQSGQ). Residues 452–477 (LFDYIQSITSYLGPPIAAVFLLAIFC) form a helical membrane-spanning segment. A D-glucose-binding site is contributed by Q457. Topologically, residues 478–481 (KRVN) are cytoplasmic. Residues 482–504 (EQGAFWGLILGFLIGISRMITEF) form a helical membrane-spanning segment. The Extracellular portion of the chain corresponds to 505-525 (AYGTGSCMEPSNCPKIICGVH). The helical transmembrane segment at 526-547 (YLYFAIILFVISVITILIISFL) threads the bilayer. Over 548–645 (TKPIPDVHLY…TSEKPLWRTV (98 aa)) the chain is Cytoplasmic. S585 bears the Phosphoserine mark. Residue T588 is modified to Phosphothreonine. The chain crosses the membrane as a helical span at residues 646 to 663 (VNINGIILLAVAVFCHAY). Over 664-665 (FA) the chain is Extracellular.

Belongs to the sodium:solute symporter (SSF) (TC 2.A.21) family. Post-translationally, N-glycosylation is not necessary for the cotransporter function. Expressed in enterocytes and enteroendocrine cells of small intestine (at protein level). Expressed in S3 segments of renal proximal tubules (at protein level). Expressed in endometrial glandular and epithelial cells (at protein level).

The protein resides in the apical cell membrane. It catalyses the reaction D-glucose(out) + 2 Na(+)(out) = D-glucose(in) + 2 Na(+)(in). The enzyme catalyses D-galactose(out) + 2 Na(+)(out) = D-galactose(in) + 2 Na(+)(in). Enhanced by the interaction with PDZK1IP1/MAP17; but unlike SLC5A2/SGLT2, PDZK1IP1 is not essential for SLC5A1 transporter activity. Possibly modulated by cholesterol binding. Functionally, electrogenic Na(+)-coupled sugar symporter that actively transports D-glucose or D-galactose at the plasma membrane, with a Na(+) to sugar coupling ratio of 2:1. Transporter activity is driven by a transmembrane Na(+) electrochemical gradient set by the Na(+)/K(+) pump. Has a primary role in the transport of dietary monosaccharides from enterocytes to blood. Responsible for the absorption of D-glucose or D-galactose across the apical brush-border membrane of enterocytes, whereas basolateral exit is provided by GLUT2. Additionally, functions as a D-glucose sensor in enteroendocrine cells, triggering the secretion of the incretins GCG and GIP that control food intake and energy homeostasis. Together with SGLT2, functions in reabsorption of D-glucose from glomerular filtrate, playing a nonredundant role in the S3 segment of the proximal tubules. Transports D-glucose into endometrial epithelial cells, controlling glycogen synthesis and nutritional support for the embryo as well as the decidual transformation of endometrium prior to conception. Acts as a water channel enabling passive water transport in response to the osmotic gradient created upon sugar and Na(+) uptake. Has high water conductivity comparable to aquaporins and therefore is expected to play an important role in transepithelial water permeability, especially in the small intestine. This is Sodium/glucose cotransporter 1 (Slc5a1) from Mus musculus (Mouse).